The primary structure comprises 169 residues: S-ribosylhomocysteine lyase (169 aa).

Fe cation-binding residues include His-54, His-58, and Cys-128.

It belongs to the LuxS family. Homodimer. Requires Fe cation as cofactor.

The catalysed reaction is S-(5-deoxy-D-ribos-5-yl)-L-homocysteine = (S)-4,5-dihydroxypentane-2,3-dione + L-homocysteine. In terms of biological role, involved in the synthesis of autoinducer 2 (AI-2) which is secreted by bacteria and is used to communicate both the cell density and the metabolic potential of the environment. The regulation of gene expression in response to changes in cell density is called quorum sensing. Catalyzes the transformation of S-ribosylhomocysteine (RHC) to homocysteine (HC) and 4,5-dihydroxy-2,3-pentadione (DPD). The sequence is that of S-ribosylhomocysteine lyase from Shewanella woodyi (strain ATCC 51908 / MS32).